Reading from the N-terminus, the 265-residue chain is 5'-nucleotidase SurE (265 aa).

A divalent metal cation contacts are provided by Asp-8, Asp-9, Ser-41, and Asn-100.

This sequence belongs to the SurE nucleotidase family. Requires a divalent metal cation as cofactor.

The protein localises to the cytoplasm. The enzyme catalyses a ribonucleoside 5'-phosphate + H2O = a ribonucleoside + phosphate. Nucleotidase that shows phosphatase activity on nucleoside 5'-monophosphates. In Brevibacillus brevis (strain 47 / JCM 6285 / NBRC 100599), this protein is 5'-nucleotidase SurE.